The chain runs to 354 residues: Opsin-1, short-wave-sensitive 2 (354 aa).

The Extracellular segment spans residues 1–43 (MKQQQQTPELFEDFHMPITLDVSNISAYSPFLVPQDHLGHSGV). Asparagine 24 carries an N-linked (GlcNAc...) asparagine glycan. A helical membrane pass occupies residues 44–68 (FMGMSAFMLFLFIAGTAINVLTIVC). Residues 69 to 80 (TIQYKKLRSHLN) are Cytoplasmic-facing. The chain crosses the membrane as a helical span at residues 81–106 (YILVNLAISNLWVSVFGSSVAFYAFY). Residues 107–120 (KKYFVFGPIGCKIE) lie on the Extracellular side of the membrane. Cysteine 117 and cysteine 194 form a disulfide bridge. Residues 121 to 140 (GFTSTIGGMVSLWSLAVVAL) form a helical membrane-spanning segment. Topologically, residues 141–159 (ERWLVICKPLGNFTFKTPH) are cytoplasmic. A helical membrane pass occupies residues 160–183 (AIAGCILPWCMALAAGLPPLLGWS). Topologically, residues 184 to 209 (RYIPEGLQCSCGPDWYTTNNKFNNES) are extracellular. An N-linked (GlcNAc...) asparagine glycan is attached at asparagine 207. A helical membrane pass occupies residues 210-237 (YVMFLFCFCFAVPFSTIVFCYGQLLITL). Over 238–259 (KLAAKAQADSASTQKAEREVTK) the chain is Cytoplasmic. Residues 260 to 283 (MVVVMVFGFLICWGPYAIFAIWVV) traverse the membrane as a helical segment. Residues 284 to 291 (SNRGAPFD) lie on the Extracellular side of the membrane. The chain crosses the membrane as a helical span at residues 292 to 316 (LRLATIPSCLCKASTVYNPVIYVLM). At lysine 303 the chain carries N6-(retinylidene)lysine. At 317–354 (NKQFRSCMMKMVFNKNIEEDEASSSSQVTQVSSVAPEK) the chain is on the cytoplasmic side.

It belongs to the G-protein coupled receptor 1 family. Opsin subfamily. In terms of processing, phosphorylated on some or all of the serine and threonine residues present in the C-terminal region. Retinal long single cone outer segments.

It is found in the membrane. Its function is as follows. Visual pigments are the light-absorbing molecules that mediate vision. They consist of an apoprotein, opsin, covalently linked to cis-retinal. In Danio rerio (Zebrafish), this protein is Opsin-1, short-wave-sensitive 2 (opn1sw2).